Consider the following 876-residue polypeptide: ATP-dependent helicase Lhr-Core (876 aa).

The ATP site is built by Gln37, Lys60, Thr61, Asp175, Glu176, Arg374, and His377. The Helicase ATP-binding domain maps to 41 to 232; it reads IPLIKKGKNV…FLVGGNGDYE (192 aa). The DEAH box motif lies at 175-178; the sequence is DEIH. Residues 249 to 421 form the Helicase C-terminal domain; it reads PVKDLVHATE…NIHVPENPLD (173 aa). The tract at residues 422 to 506 is WH domain; sequence VLTQLIVAAS…IFFLNSGTIP (85 aa). Positions 507-876 are domain 4; the sequence is DEAMIPVKME…DLEYTEAGIK (370 aa).

The protein belongs to the Lhr helicase family. Lhr-Core subfamily. As to quaternary structure, monomer.

The catalysed reaction is Couples ATP hydrolysis with the unwinding of duplex DNA by translocating in the 3'-5' direction.. It carries out the reaction ATP + H2O = ADP + phosphate + H(+). Probably part of a 4-gene DNA damage response locus in which the upstream ups system, in combination with this downstream locus, functions in homologous recombination to rescue Sulfolobales from DNA-damaging threats. DNA helicase that translocates in a 3'-5' direction on single-stranded (ss)DNA. Binds Holliday junction (HJ) DNA, Y-shaped DNA, DNA with a 3'-overhang and single-stranded (ss)DNA with high affinity; binds double-stranded (ds)DNA with less affinity. Has helicase activity on DNA with a 3'-overhang, Y-shaped DNA and HJ DNA. Does not unwind blunt-ended dsDNA or DNA with a 5'-overhang. The protein is ATP-dependent helicase Lhr-Core of Sulfolobus acidocaldarius (strain ATCC 33909 / DSM 639 / JCM 8929 / NBRC 15157 / NCIMB 11770).